Reading from the N-terminus, the 466-residue chain is Magnetosome-associated protein MamJ (466 aa).

Disordered stretches follow at residues 1 to 23 (MAKNRRDRGTDLPGDGDQKISTG) and 60 to 80 (ANQGGLVETAQPPSAPIRSQD). The tract at residues 1 to 24 (MAKNRRDRGTDLPGDGDQKISTGP) is not required to restore magnetic response to deletion mutant. Residues 25–80 (EIVSVTVHPSPNLAAAAKPVQGDIWASLLESSPWSANQGGLVETAQPPSAPIRSQD) are required to restore magnetic response to deletion mutant. 2 Tandem repeat unit repeats span residues 81–168 (PVPV…VEPE) and 169–256 (PAPV…VEPE). Not required to restore magnetic response to deletion mutant regions lie at residues 81–256 (PVPV…VEPE), 136–334 (ETDA…SQAE), 333–374 (AESV…AVEA), and 432–466 (VGSNVVAGTRRLAQTIEVSCGSCSSPKCDAEDKNK). Glu-Pro-rich motif repeat units follow at residues 145–164 (IEPEPALVEPVIEIEAEAAE), 233–252 (IEPEPALVEPVIEIEAEAAE), and 253–272 (VEPEPAPVEPVIEIEAEAAE). Required to restore magnetic response to deletion mutant stretches follow at residues 375–432 (TRQP…GRLV) and 426–466 (VKGG…DKNK).

Belongs to the magnetosome MamJ protein family. As to quaternary structure, forms homooligomers. Interacts with MamK. Post-translationally, identified by N-terminal sequencing of a protein that is about 96 kDa in size. The protein runs anomalously on protein gels.

It is found in the magnetosome. In terms of biological role, required for assembly of magnetosome chains. Regulates the dynamic behavior of MamK filaments. May connect magnetosomes to MamK filaments. Moves from the cell poles towards midcell; movement does not depend on the treadmilling ability of MamK, suggesting MamJ associates and disassociates continuously from the MamK filament. This Magnetospirillum gryphiswaldense (strain DSM 6361 / JCM 21280 / NBRC 15271 / MSR-1) protein is Magnetosome-associated protein MamJ.